The primary structure comprises 126 residues: Glycine cleavage system H protein (126 aa).

A Lipoyl-binding domain is found at 24-105; the sequence is TLTVGITDHA…AYGVWLFKIK (82 aa). An N6-lipoyllysine modification is found at Lys65.

Belongs to the GcvH family. In terms of assembly, the glycine cleavage system is composed of four proteins: P, T, L and H. (R)-lipoate is required as a cofactor.

In terms of biological role, the glycine cleavage system catalyzes the degradation of glycine. The H protein shuttles the methylamine group of glycine from the P protein to the T protein. In Burkholderia ambifaria (strain MC40-6), this protein is Glycine cleavage system H protein.